A 687-amino-acid chain; its full sequence is Complement C1s subcomponent (687 aa).

Residues 1–15 (MWCIVLLSLLAWVDA) form the signal peptide. A CUB 1 domain is found at 16-130 (EPTMYGEILS…TGFAAYYVAV (115 aa)). Glu60, Asp68, Asp113, Asp131, Val132, and Glu134 together coordinate Ca(2+). Cys65 and Cys83 are disulfide-bonded. Residues 131 to 172 (DVNECTDFADSPCSHFCNNYIGGYFCSCPPEYFLHEDKKNCG) form the EGF-like; calcium-binding domain. Cystine bridges form between Cys135/Cys147, Cys143/Cys156, and Cys158/Cys171. Positions 149, 150, and 153 each coordinate Ca(2+). Asn149 is modified ((3R)-3-hydroxyasparagine). An N-linked (GlcNAc...) asparagine glycan is attached at Asn174. 9 disulfides stabilise this stretch: Cys175–Cys202, Cys234–Cys251, Cys294–Cys341, Cys321–Cys354, Cys359–Cys403, Cys386–Cys421, Cys425–Cys548, Cys594–Cys617, and Cys626–Cys658. One can recognise a CUB 2 domain in the interval 175–290 (CSGDVFTTLI…KGWKFRYHGD (116 aa)). 2 consecutive Sushi domains span residues 292-356 (IPCP…RCQP) and 357-423 (VDCG…KCVP). Residue Asn406 is glycosylated (N-linked (GlcNAc...) asparagine). The region spanning 438–679 (IFGGIITKIE…YIDWIRETMQ (242 aa)) is the Peptidase S1 domain. Residues His475 and Asp528 each act as charge relay system in the active site. Ser630 functions as the Charge relay system in the catalytic mechanism.

Belongs to the peptidase S1 family. As to quaternary structure, C1 is a calcium-dependent trimolecular complex of C1q, C1r and C1s in the molar ration of 1:2:2. Activated C1s is an disulfide-linked heterodimer of a heavy chain and a light chain. In terms of processing, the iron and 2-oxoglutarate dependent 3-hydroxylation of aspartate and asparagine is (R) stereospecific within EGF domains.

It carries out the reaction Cleavage of Arg-|-Ala bond in complement component C4 to form C4a and C4b, and Lys(or Arg)-|-Lys bond in complement component C2 to form C2a and C2b: the 'classical' pathway C3 convertase.. With respect to regulation, inhibited by SERPING1. C1s B chain is a serine protease that combines with C1q and C1r to form C1, the first component of the classical pathway of the complement system. C1r activates C1s so that it can, in turn, activate C2 and C4. Also cleaves IGFBP5 and thereby inhibits the trophic effects of IGF1. This chain is Complement C1s subcomponent, found in Sus scrofa (Pig).